We begin with the raw amino-acid sequence, 135 residues long: Large ribosomal subunit protein eL32 (135 aa).

The protein belongs to the eukaryotic ribosomal protein eL32 family.

In Methanococcus maripaludis (strain C6 / ATCC BAA-1332), this protein is Large ribosomal subunit protein eL32.